Reading from the N-terminus, the 264-residue chain is Small ribosomal subunit protein uS2 (264 aa).

Residues 222–246 are disordered; it reads GRSENKDEQNEQGEQIAPVTNEEKQ.

It belongs to the universal ribosomal protein uS2 family.

The polypeptide is Small ribosomal subunit protein uS2 (Helicobacter hepaticus (strain ATCC 51449 / 3B1)).